The chain runs to 295 residues: Pyridoxal 5'-phosphate synthase subunit PdxS (295 aa).

Asp25 contacts D-ribose 5-phosphate. Lys82 (schiff-base intermediate with D-ribose 5-phosphate) is an active-site residue. Gly154 contacts D-ribose 5-phosphate. Arg166 contacts D-glyceraldehyde 3-phosphate. Residues Gly215 and 236–237 (GS) each bind D-ribose 5-phosphate.

It belongs to the PdxS/SNZ family. In terms of assembly, in the presence of PdxT, forms a dodecamer of heterodimers.

It carries out the reaction aldehydo-D-ribose 5-phosphate + D-glyceraldehyde 3-phosphate + L-glutamine = pyridoxal 5'-phosphate + L-glutamate + phosphate + 3 H2O + H(+). It functions in the pathway cofactor biosynthesis; pyridoxal 5'-phosphate biosynthesis. Functionally, catalyzes the formation of pyridoxal 5'-phosphate from ribose 5-phosphate (RBP), glyceraldehyde 3-phosphate (G3P) and ammonia. The ammonia is provided by the PdxT subunit. Can also use ribulose 5-phosphate and dihydroxyacetone phosphate as substrates, resulting from enzyme-catalyzed isomerization of RBP and G3P, respectively. This is Pyridoxal 5'-phosphate synthase subunit PdxS from Staphylococcus aureus (strain Mu3 / ATCC 700698).